We begin with the raw amino-acid sequence, 198 residues long: Angiopoietin-like protein 8 (198 aa).

Residues 1 to 21 form the signal peptide; the sequence is MPVPALCLLWALAMVTRPASA.

The protein belongs to the ANGPTL8 family. In terms of assembly, interacts with ANGPTL3. Post-translationally, proteolytically cleaved at the N-terminus. Predominantly expressed in liver. Also expressed in adipose tissues.

Its subcellular location is the secreted. Hormone that acts as a blood lipid regulator by regulating serum triglyceride levels. May be involved in the metabolic transition between fasting and refeeding: required to direct fatty acids to adipose tissue for storage in the fed state. This is Angiopoietin-like protein 8 from Homo sapiens (Human).